The sequence spans 424 residues: Histidinol dehydrogenase (424 aa).

Positions 121, 183, and 206 each coordinate NAD(+). S229, Q251, and H254 together coordinate substrate. 2 residues coordinate Zn(2+): Q251 and H254. Active-site proton acceptor residues include E319 and H320. Residues H320, D353, E407, and H412 each contribute to the substrate site. D353 provides a ligand contact to Zn(2+). H412 contributes to the Zn(2+) binding site.

It belongs to the histidinol dehydrogenase family. The cofactor is Zn(2+).

The catalysed reaction is L-histidinol + 2 NAD(+) + H2O = L-histidine + 2 NADH + 3 H(+). The protein operates within amino-acid biosynthesis; L-histidine biosynthesis; L-histidine from 5-phospho-alpha-D-ribose 1-diphosphate: step 9/9. Functionally, catalyzes the sequential NAD-dependent oxidations of L-histidinol to L-histidinaldehyde and then to L-histidine. This Halalkalibacterium halodurans (strain ATCC BAA-125 / DSM 18197 / FERM 7344 / JCM 9153 / C-125) (Bacillus halodurans) protein is Histidinol dehydrogenase.